A 544-amino-acid polypeptide reads, in one-letter code: Chaperonin GroEL (544 aa).

Residues 29 to 32, lysine 50, 86 to 90, glycine 414, 477 to 479, and aspartate 493 each bind ATP; these read TMGP, DGTTT, and NAA. Residues 525 to 544 form a disordered region; that stretch reads DKPAMPSMPDMGGMGMPGMM.

Belongs to the chaperonin (HSP60) family. Forms a cylinder of 14 subunits composed of two heptameric rings stacked back-to-back. Interacts with the co-chaperonin GroES.

It localises to the cytoplasm. The catalysed reaction is ATP + H2O + a folded polypeptide = ADP + phosphate + an unfolded polypeptide.. Its function is as follows. Together with its co-chaperonin GroES, plays an essential role in assisting protein folding. The GroEL-GroES system forms a nano-cage that allows encapsulation of the non-native substrate proteins and provides a physical environment optimized to promote and accelerate protein folding. This is Chaperonin GroEL from Aliarcobacter butzleri (strain RM4018) (Arcobacter butzleri).